Consider the following 352-residue polypeptide: Biotin synthase (352 aa).

Residues 44 to 262 form the Radical SAM core domain; that stretch reads NRVQVSTLLS…LAVARIMMPK (219 aa). Residues Cys59, Cys63, and Cys66 each contribute to the [4Fe-4S] cluster site. 4 residues coordinate [2Fe-2S] cluster: Cys103, Cys134, Cys194, and Arg266.

The protein belongs to the radical SAM superfamily. Biotin synthase family. As to quaternary structure, homodimer. [4Fe-4S] cluster serves as cofactor. Requires [2Fe-2S] cluster as cofactor.

The enzyme catalyses (4R,5S)-dethiobiotin + (sulfur carrier)-SH + 2 reduced [2Fe-2S]-[ferredoxin] + 2 S-adenosyl-L-methionine = (sulfur carrier)-H + biotin + 2 5'-deoxyadenosine + 2 L-methionine + 2 oxidized [2Fe-2S]-[ferredoxin]. The protein operates within cofactor biosynthesis; biotin biosynthesis; biotin from 7,8-diaminononanoate: step 2/2. Catalyzes the conversion of dethiobiotin (DTB) to biotin by the insertion of a sulfur atom into dethiobiotin via a radical-based mechanism. This is Biotin synthase from Ectopseudomonas mendocina (strain ymp) (Pseudomonas mendocina).